A 944-amino-acid polypeptide reads, in one-letter code: snRNA-activating protein complex subunit 4 homolog (944 aa).

The segment at 1-22 is disordered; the sequence is MSDLVMFEPGASTSTDVPTNTD. Residues 11–22 are compositionally biased toward polar residues; the sequence is ASTSTDVPTNTD. Residues 177-244 enclose the Myb-like 1 domain; it reads TSNFDRRQWT…AVKSKWYNEL (68 aa). An HTH myb-type 1 domain is found at 245–301; it reads NPKWNKEHWSNEEVEKLKYLRESPKFVSWPMLALNLGTNRTSYQCMEKYKTEVSQHS. The H-T-H motif DNA-binding region spans 273-297; sequence WPMLALNLGTNRTSYQCMEKYKTEV. One can recognise a Myb-like 2 domain in the interval 304 to 350; that stretch reads WSQDEDTKLIALTKITSINGHIQWDKVAQCMPGRTRQQVRTRFSHTL. HTH myb-type domains are found at residues 351-406 and 407-459; these read DASV…NRSA and HVNE…AAKL. DNA-binding regions (H-T-H motif) lie at residues 379–402 and 432–455; these read WAKV…TNVL and WAKC…LQLI. The segment covering 911 to 921 has biased composition (low complexity); it reads ARPARPPRSSA. A disordered region spans residues 911 to 935; that stretch reads ARPARPPRSSAGTPTPSHVSIDTES. Residues 922–935 are compositionally biased toward polar residues; the sequence is GTPTPSHVSIDTES.

As to expression, broadly expressed in all tissues, including head, vulva and tail.

The protein resides in the nucleus. Binds to the promoter regions of RNA polymerase II and III small-nuclear RNA genes, type 3 RNA polymerase III non-coding RNA genes, small nucleolar RNAs and transfer RNA genes. Required for expression of mature 21U-RNAs. This chain is snRNA-activating protein complex subunit 4 homolog, found in Caenorhabditis elegans.